The sequence spans 290 residues: Acetyl-coenzyme A carboxylase carboxyl transferase subunit beta (290 aa).

Residues 27–290 (LWVKCPSCEA…LQRQPADALA (264 aa)) enclose the CoA carboxyltransferase N-terminal domain. Zn(2+) contacts are provided by Cys31, Cys34, Cys50, and Cys53. A C4-type zinc finger spans residues 31 to 53 (CPSCEAVLYRNDVDANLHVCPKC).

The protein belongs to the AccD/PCCB family. As to quaternary structure, acetyl-CoA carboxylase is a heterohexamer composed of biotin carboxyl carrier protein (AccB), biotin carboxylase (AccC) and two subunits each of ACCase subunit alpha (AccA) and ACCase subunit beta (AccD). The cofactor is Zn(2+).

It localises to the cytoplasm. The catalysed reaction is N(6)-carboxybiotinyl-L-lysyl-[protein] + acetyl-CoA = N(6)-biotinyl-L-lysyl-[protein] + malonyl-CoA. The protein operates within lipid metabolism; malonyl-CoA biosynthesis; malonyl-CoA from acetyl-CoA: step 1/1. In terms of biological role, component of the acetyl coenzyme A carboxylase (ACC) complex. Biotin carboxylase (BC) catalyzes the carboxylation of biotin on its carrier protein (BCCP) and then the CO(2) group is transferred by the transcarboxylase to acetyl-CoA to form malonyl-CoA. In Burkholderia cenocepacia (strain ATCC BAA-245 / DSM 16553 / LMG 16656 / NCTC 13227 / J2315 / CF5610) (Burkholderia cepacia (strain J2315)), this protein is Acetyl-coenzyme A carboxylase carboxyl transferase subunit beta.